We begin with the raw amino-acid sequence, 561 residues long: Laccase-1 (561 aa).

The signal sequence occupies residues 1–20; that stretch reads MKNSFFSSLAKFASLSLAFA. Plastocyanin-like domains follow at residues 68–185 and 191–337; these read VVQN…GPAT and DLGM…YTGS. N-linked (GlcNAc...) asparagine glycosylation is found at N71, N87, and N114. Residues H119, H121, H163, and H165 each contribute to the Cu cation site. C140 and C542 are oxidised to a cystine. 5 N-linked (GlcNAc...) asparagine glycosylation sites follow: N226, N284, N327, N391, and N398. The Plastocyanin-like 3 domain maps to 396–525; it reads LLNWTDPTLL…ALQFVESESS (130 aa). Cu cation is bound by residues H445, H448, H450, H504, C505, H506, and H510.

It belongs to the multicopper oxidase family. Requires Cu cation as cofactor.

The protein localises to the secreted. The catalysed reaction is 4 hydroquinone + O2 = 4 benzosemiquinone + 2 H2O. Lignin degradation and detoxification of lignin-derived products. This is Laccase-1 (lcc1) from Botryotinia fuckeliana (Noble rot fungus).